The sequence spans 78 residues: UPF0335 protein RrIowa_0193 (78 aa).

It belongs to the UPF0335 family.

The sequence is that of UPF0335 protein RrIowa_0193 from Rickettsia rickettsii (strain Iowa).